The sequence spans 511 residues: Histidine ammonia-lyase (511 aa).

The 5-imidazolinone (Ala-Gly) cross-link spans 144 to 146 (ASG). Ser-145 bears the 2,3-didehydroalanine (Ser) mark.

Belongs to the PAL/histidase family. Contains an active site 4-methylidene-imidazol-5-one (MIO), which is formed autocatalytically by cyclization and dehydration of residues Ala-Ser-Gly.

It localises to the cytoplasm. It carries out the reaction L-histidine = trans-urocanate + NH4(+). Its pathway is amino-acid degradation; L-histidine degradation into L-glutamate; N-formimidoyl-L-glutamate from L-histidine: step 1/3. The chain is Histidine ammonia-lyase from Halalkalibacterium halodurans (strain ATCC BAA-125 / DSM 18197 / FERM 7344 / JCM 9153 / C-125) (Bacillus halodurans).